The sequence spans 205 residues: Tumor suppressor candidate gene 1 protein homolog (205 aa).

Over residues 1 to 12 the composition is skewed to low complexity; it reads MWRMRGGATRRG. The segment at 1–49 is disordered; it reads MWRMRGGATRRGSCGGEGGGSRGESGRLGRAREGGGGGGGVGWRGRAGG. The segment covering 13 to 23 has biased composition (gly residues); the sequence is SCGGEGGGSRG. The segment covering 24–33 has biased composition (basic and acidic residues); the sequence is ESGRLGRARE. A compositionally biased stretch (gly residues) spans 34 to 48; sequence GGGGGGGVGWRGRAG. Residues 66-110 are a coiled coil; sequence LEALRARDERDRQNARLREENARLRLENRRLRRENRSLFRQALRL. 2 disordered regions span residues 113-149 and 174-205; these read DSGE…SPRA and GARP…RPWL. Ser146 is modified (phosphoserine). The segment covering 196–205 has biased composition (basic and acidic residues); that stretch reads HDPDVPRPWL.

In Mus musculus (Mouse), this protein is Tumor suppressor candidate gene 1 protein homolog (Tusc1).